The chain runs to 213 residues: Riboflavin/roseoflavin transporter RibM (213 aa).

The next 5 helical transmembrane spans lie at 15–35 (HIIW…ALGF), 38–58 (SLWT…AFYG), 107–129 (IAAA…SLSW), 136–158 (YIFV…FWFA), and 171–193 (FANG…LWGM).

This sequence belongs to the nicotinamide ribonucleoside (NR) uptake permease (TC 4.B.1) family.

It is found in the cell membrane. In terms of biological role, transports riboflavin and roseoflavin. Can also transport FMN and FAD. May confer roseoflavin resistance to S.davawensis, which naturally produces this antibiotic during stationary growth phase. This is Riboflavin/roseoflavin transporter RibM from Streptomyces davaonensis (strain DSM 101723 / JCM 4913 / KCC S-0913 / 768).